Reading from the N-terminus, the 583-residue chain is Arginine--tRNA ligase (583 aa).

A 'HIGH' region motif is present at residues 131–141 (ANPTGPMHVGH).

Belongs to the class-I aminoacyl-tRNA synthetase family. Monomer.

Its subcellular location is the cytoplasm. The catalysed reaction is tRNA(Arg) + L-arginine + ATP = L-arginyl-tRNA(Arg) + AMP + diphosphate. This Parvibaculum lavamentivorans (strain DS-1 / DSM 13023 / NCIMB 13966) protein is Arginine--tRNA ligase.